The chain runs to 429 residues: MDKLLIRGGRQLRGEVLISGAKNAALPELCAALLTDQPVTLHNVPRLQDVSTMLKLVRNMGVAAERDDNGTVRLDAGDLSIPEAPYELVKTMRASVLALGPLLARFGHAKVSLPGGCAIGSRPVDQHIKGLQAMGAEIVVEHGYMIASLPAGRTRLKGARILTDMVTVTGTENFLMAAALAEGETLLENAAQEPEIVDLAEMLIRMGARIEGHGTSHIRIQGVEKLHGCEHAVVADRIEAGTFLCAVAATGGDVFLRHARADHMDAVIDKLRDAGCTVAAQEGGVRISSSAPACEHLKAQSFSTTEYPGFPTDMQAQFMALNVIARGASMVTETIFENRFMHVNEMVRLGATIHVEGKVAMVEGVQQLSGATVMATDLRASASLVIAGLVADGETLVDRIYHLDRGYDRMEAKLRGLGADIERISGAAA.

Residue 22–23 (KN) participates in phosphoenolpyruvate binding. A UDP-N-acetyl-alpha-D-glucosamine-binding site is contributed by arginine 93. Cysteine 117 (proton donor) is an active-site residue. The residue at position 117 (cysteine 117) is a 2-(S-cysteinyl)pyruvic acid O-phosphothioketal. Residues 122 to 126 (RPVDQ), aspartate 313, and isoleucine 335 contribute to the UDP-N-acetyl-alpha-D-glucosamine site.

Belongs to the EPSP synthase family. MurA subfamily.

It is found in the cytoplasm. The catalysed reaction is phosphoenolpyruvate + UDP-N-acetyl-alpha-D-glucosamine = UDP-N-acetyl-3-O-(1-carboxyvinyl)-alpha-D-glucosamine + phosphate. It functions in the pathway cell wall biogenesis; peptidoglycan biosynthesis. Functionally, cell wall formation. Adds enolpyruvyl to UDP-N-acetylglucosamine. This Variovorax paradoxus (strain S110) protein is UDP-N-acetylglucosamine 1-carboxyvinyltransferase.